Here is a 504-residue protein sequence, read N- to C-terminus: Pyrichalasin C-7 hydroxylase (504 aa).

A signal peptide spans 1-17; it reads MLNSAACIVLAITAVLG. Residue cysteine 449 coordinates heme.

This sequence belongs to the cytochrome P450 family. Heme is required as a cofactor.

Its pathway is mycotoxin biosynthesis. Its function is as follows. Cytochrome P450 monooxygenase; part of the gene cluster that mediates the biosynthesis of the mycotoxin pyrichalasin H, a tyrosine-derived cytochalasan that inhibits the growth of rice seedlings, but also inhibits lymphocyte capping and actin polymerization and alters cell morphology. Pyrichalasin H is indicated as the responsible agent for the genus-specific pathogenicity of M.grisea toward crabgrass. The first step in the pathway is catalyzed by the O-methyltransferase pyiA which methylates free tyrosine to generate the precursor O-methyltyrosine. The hybrid PKS-NRPS pyiS, assisted by the enoyl reductase pyiC, are responsible for fusion of the O-methyltyrosine precursor and the polyketide backbone. The polyketide synthase module (PKS) of pyiS is responsible for the synthesis of the polyketide backbone and the downstream nonribosomal peptide synthetase (NRPS) amidates the carboxyl end of the polyketide with the O-methyltyrosine precursor. As the NRPS A-domain demonstrates substrate tolerance, pyiS can also use phenylalanine, tyrosine and even para-chlorophenylalanine as amino acid precursor, which leads to the production of novel cytochalasans, including halogenated cytochalasans. Because pyiS lacks a designated enoylreductase (ER) domain, the required activity is provided the enoyl reductase pyiC. Reduction by the hydrolyase pyiE leads to 1,5-dihydropyrrolone, which is substrate for dehydration and intra-molecular Diels-Alder cyclization by the Diels-Alderase pyiF to yield the required isoindolone-fused macrocycle. The tailoring cytochrome P450 monooxygenases piyD and piyG catalyze the hydroxylation at C-18 and C-7, respectivily, whereas the short-chain dehydrogenase/reductase pyiH reduces the carbonyl at C-21 in preparation for the transfer of an acetyl group by the acetyltransferase pyiB. These 3 reactions whose order is not clear yet, lead to the production of O-methylpyrichalasin J, a deacetylated pyrichalasin H. Finally, pyiB to converts O-methylpyrichalasin J into the final product pyrichalasin H via acetylation of C-21. The protein is Pyrichalasin C-7 hydroxylase of Pyricularia grisea (Crabgrass-specific blast fungus).